The following is a 413-amino-acid chain: Gamma-glutamyl phosphate reductase (413 aa).

The protein belongs to the gamma-glutamyl phosphate reductase family.

It is found in the cytoplasm. The enzyme catalyses L-glutamate 5-semialdehyde + phosphate + NADP(+) = L-glutamyl 5-phosphate + NADPH + H(+). It functions in the pathway amino-acid biosynthesis; L-proline biosynthesis; L-glutamate 5-semialdehyde from L-glutamate: step 2/2. Functionally, catalyzes the NADPH-dependent reduction of L-glutamate 5-phosphate into L-glutamate 5-semialdehyde and phosphate. The product spontaneously undergoes cyclization to form 1-pyrroline-5-carboxylate. This chain is Gamma-glutamyl phosphate reductase, found in Caulobacter vibrioides (strain ATCC 19089 / CIP 103742 / CB 15) (Caulobacter crescentus).